The primary structure comprises 552 residues: 5'-AMP-activated protein kinase catalytic subunit alpha-2 (552 aa).

The Protein kinase domain maps to 16-268; it reads YVLGDTLGVG…IKDIREHEWF (253 aa). Residues 22-30 and lysine 45 each bind ATP; that span reads LGVGTFGKV. Aspartate 139 acts as the Proton acceptor in catalysis. Threonine 172 is modified (phosphothreonine; by LKB1 and CaMKK2). Position 258 is a phosphothreonine (threonine 258). The AIS stretch occupies residues 291–376; it reads EAVKEVCEKF…PERMPPLIAD (86 aa). Serine 377 is modified (phosphoserine). The disordered stretch occupies residues 478-520; sequence EQRSGSSTPQRSCSAAGLHRPRSSVDSSTAENHSLSGSLTGSL. A compositionally biased stretch (polar residues) spans 480–490; the sequence is RSGSSTPQRSC. Serine 491 bears the Phosphoserine mark. Over residues 501 to 510 the composition is skewed to polar residues; that stretch reads SVDSSTAENH. A compositionally biased stretch (low complexity) spans 511–520; it reads SLSGSLTGSL.

Belongs to the protein kinase superfamily. CAMK Ser/Thr protein kinase family. SNF1 subfamily. AMPK is a heterotrimer of an alpha catalytic subunit (PRKAA1 or PRKAA2), a beta (PRKAB1 or PRKAB2) and a gamma non-catalytic subunits (PRKAG1, PRKAG2 or PRKAG3). Interacts with FNIP1 and FNIP2. Associates with internalized INSR complexes on Golgi/endosomal membranes; PRKAA2/AMPK2 together with ATIC and HACD3/PTPLAD1 is proposed to be part of a signaling network regulating INSR autophosphorylation and endocytosis. Interacts with DUSP29. Interacts with ARF6. The phosphorylated form at Thr-172 mediated by CamKK2 interacts with ACSS2. Requires Mg(2+) as cofactor. Post-translationally, ubiquitinated. Phosphorylated at Thr-172 by STK11/LKB1 in complex with STE20-related adapter-alpha (STRADA) pseudo kinase and CAB39. Also phosphorylated at Thr-172 by CAMKK2; triggered by a rise in intracellular calcium ions, without detectable changes in the AMP/ATP ratio. CAMKK1 can also phosphorylate Thr-172, but at much lower level. Dephosphorylated by protein phosphatase 2A and 2C (PP2A and PP2C). Phosphorylated by ULK1; leading to negatively regulate AMPK activity and suggesting the existence of a regulatory feedback loop between ULK1 and AMPK. Dephosphorylated by PPM1A and PPM1B at Thr-172 (mediated by STK11/LKB1). As to expression, skeletal muscle, lower levels in liver, heart and kidney.

The protein resides in the cytoplasm. The protein localises to the nucleus. The enzyme catalyses L-seryl-[protein] + ATP = O-phospho-L-seryl-[protein] + ADP + H(+). It carries out the reaction L-threonyl-[protein] + ATP = O-phospho-L-threonyl-[protein] + ADP + H(+). It catalyses the reaction L-seryl-[acetyl-CoA carboxylase] + ATP = O-phospho-L-seryl-[acetyl-CoA carboxylase] + ADP + H(+). The catalysed reaction is L-seryl-[3-hydroxy-3-methylglutaryl-coenzyme A reductase] + ATP = O-phospho-L-seryl-[3-hydroxy-3-methylglutaryl-coenzyme A reductase] + ADP + H(+). With respect to regulation, activated by phosphorylation on Thr-172. Binding of AMP to non-catalytic gamma subunit (PRKAG1, PRKAG2 or PRKAG3) results in allosteric activation, inducing phosphorylation on Thr-172. AMP-binding to gamma subunit also sustains activity by preventing dephosphorylation of Thr-172. ADP also stimulates Thr-172 phosphorylation, without stimulating already phosphorylated AMPK. ATP promotes dephosphorylation of Thr-172, rendering the enzyme inactive. Under physiological conditions AMPK mainly exists in its inactive form in complex with ATP, which is much more abundant than AMP. Selectively inhibited by compound C (6-[4-(2-Piperidin-1-yl-ethoxy)-phenyl)]-3-pyridin-4-yl-pyyrazolo[1,5-a] pyrimidine. Activated by resveratrol, a natural polyphenol present in red wine, and S17834, a synthetic polyphenol. Salicylate/aspirin directly activates kinase activity, primarily by inhibiting Thr-172 dephosphorylation. Its function is as follows. Catalytic subunit of AMP-activated protein kinase (AMPK), an energy sensor protein kinase that plays a key role in regulating cellular energy metabolism. In response to reduction of intracellular ATP levels, AMPK activates energy-producing pathways and inhibits energy-consuming processes: inhibits protein, carbohydrate and lipid biosynthesis, as well as cell growth and proliferation. AMPK acts via direct phosphorylation of metabolic enzymes, and by longer-term effects via phosphorylation of transcription regulators. Regulates lipid synthesis by phosphorylating and inactivating lipid metabolic enzymes such as ACACA, ACACB, GYS1, HMGCR and LIPE; regulates fatty acid and cholesterol synthesis by phosphorylating acetyl-CoA carboxylase (ACACA and ACACB) and hormone-sensitive lipase (LIPE) enzymes, respectively. Promotes lipolysis of lipid droplets by mediating phosphorylation of isoform 1 of CHKA (CHKalpha2). Regulates insulin-signaling and glycolysis by phosphorylating IRS1, PFKFB2 and PFKFB3. Involved in insulin receptor/INSR internalization. AMPK stimulates glucose uptake in muscle by increasing the translocation of the glucose transporter SLC2A4/GLUT4 to the plasma membrane, possibly by mediating phosphorylation of TBC1D4/AS160. Regulates transcription and chromatin structure by phosphorylating transcription regulators involved in energy metabolism such as CRTC2/TORC2, FOXO3, histone H2B, HDAC5, MEF2C, MLXIPL/ChREBP, EP300, HNF4A, p53/TP53, SREBF1, SREBF2 and PPARGC1A. Acts as a key regulator of glucose homeostasis in liver by phosphorylating CRTC2/TORC2, leading to CRTC2/TORC2 sequestration in the cytoplasm. In response to stress, phosphorylates 'Ser-36' of histone H2B (H2BS36ph), leading to promote transcription. Acts as a key regulator of cell growth and proliferation by phosphorylating FNIP1, TSC2, RPTOR, WDR24 and ATG1/ULK1: in response to nutrient limitation, negatively regulates the mTORC1 complex by phosphorylating RPTOR component of the mTORC1 complex and by phosphorylating and activating TSC2. Also phosphorylates and inhibits GATOR2 subunit WDR24 in response to nutrient limitation, leading to suppress glucose-mediated mTORC1 activation. In response to energetic stress, phosphorylates FNIP1, inactivating the non-canonical mTORC1 signaling, thereby promoting nuclear translocation of TFEB and TFE3, and inducing transcription of lysosomal or autophagy genes. In response to nutrient limitation, promotes autophagy by phosphorylating and activating ATG1/ULK1. In that process, it also activates WDR45/WIPI4. Phosphorylates CASP6, thereby preventing its autoprocessing and subsequent activation. AMPK also acts as a regulator of circadian rhythm by mediating phosphorylation of CRY1, leading to destabilize it. May regulate the Wnt signaling pathway by phosphorylating CTNNB1, leading to stabilize it. Also acts as a regulator of cellular polarity by remodeling the actin cytoskeleton; probably by indirectly activating myosin. Also phosphorylates CFTR, EEF2K, KLC1, NOS3 and SLC12A1. Plays an important role in the differential regulation of pro-autophagy (composed of PIK3C3, BECN1, PIK3R4 and UVRAG or ATG14) and non-autophagy (composed of PIK3C3, BECN1 and PIK3R4) complexes, in response to glucose starvation. Can inhibit the non-autophagy complex by phosphorylating PIK3C3 and can activate the pro-autophagy complex by phosphorylating BECN1. Upon glucose starvation, promotes ARF6 activation in a kinase-independent manner leading to cell migration. Upon glucose deprivation mediates the phosphorylation of ACSS2 at 'Ser-659', which exposes the nuclear localization signal of ACSS2, required for its interaction with KPNA1 and nuclear translocation. Upon stress, regulates mitochondrial fragmentation through phosphorylation of MTFR1L. This is 5'-AMP-activated protein kinase catalytic subunit alpha-2 (Prkaa2) from Rattus norvegicus (Rat).